Here is a 98-residue protein sequence, read N- to C-terminus: Large ribosomal subunit protein uL23 (98 aa).

Belongs to the universal ribosomal protein uL23 family. Part of the 50S ribosomal subunit. Contacts protein L29, and trigger factor when it is bound to the ribosome.

One of the early assembly proteins it binds 23S rRNA. One of the proteins that surrounds the polypeptide exit tunnel on the outside of the ribosome. Forms the main docking site for trigger factor binding to the ribosome. This Clostridium acetobutylicum (strain ATCC 824 / DSM 792 / JCM 1419 / IAM 19013 / LMG 5710 / NBRC 13948 / NRRL B-527 / VKM B-1787 / 2291 / W) protein is Large ribosomal subunit protein uL23.